The chain runs to 132 residues: Replication enhancer protein (132 aa).

It belongs to the geminiviridae replication enhancer protein family. As to quaternary structure, homooligomer. Interacts with the replication-associated protein (REP). Interacts with host proliferating cell nuclear antigen (PCNA). Interacts with host retinoblastoma-related protein 1 (RBR1), and may thereby deregulate the host cell cycle. Oligomerization and interaction with PCNA are necessary for optimal replication enhancement.

Its function is as follows. Increases viral DNA accumulation. Enhances infectivity and symptom expression. This chain is Replication enhancer protein, found in Pepper huasteco yellow vein virus (PHYVV).